Here is a 220-residue protein sequence, read N- to C-terminus: uncharacterized protein (220 aa).

The interval 1–50 is disordered; it reads MTDDVRDVNTETTDATEVAEIDSAAGEAGDSATEAFDTDSATESTAQKGQ. The segment covering 39–48 has biased composition (polar residues); it reads DSATESTAQK. A helical transmembrane segment spans residues 65–85; the sequence is VPVILILLMLISGGATGWLYL.

It to M.tuberculosis Rv1363c.

It localises to the membrane. This is an uncharacterized protein from Mycobacterium tuberculosis (strain CDC 1551 / Oshkosh).